Reading from the N-terminus, the 1122-residue chain is Receptor-type guanylate cyclase gcy-5 (1122 aa).

Residues 1-19 form the signal peptide; that stretch reads MRLLYFSMVLLWVLGASEC. Over 20-486 the chain is Extracellular; the sequence is QVIPSSRRTL…CPVQFWDQYG (467 aa). 7 N-linked (GlcNAc...) asparagine glycosylation sites follow: Asn252, Asn299, Asn344, Asn350, Asn378, Asn434, and Asn439. The helical transmembrane segment at 487–507 threads the bilayer; the sequence is VLIFVASIVLIFLICIMLMCF. Residues 508 to 1122 lie on the Cytoplasmic side of the membrane; the sequence is GFMIRGRRAE…KSKMDTLKVV (615 aa). Residues 536–562 are disordered; sequence QKEKRKPNSRRSLQSGPSTITGESKMT. Residues 542 to 830 enclose the Protein kinase domain; that stretch reads PNSRRSLQSG…NTNLMDHVFN (289 aa). Residues 545-559 are compositionally biased toward polar residues; it reads RRSLQSGPSTITGES. The Guanylate cyclase domain maps to 888-1018; sequence TVLFSDVVKF…DTVNTASRME (131 aa). A disordered region spans residues 1071 to 1122; that stretch reads SDTKSLSTRTTPPITDENWPPQMKEDLKKRAVTPYPERQRSGKSKMDTLKVV. The span at 1074-1083 shows a compositional bias: polar residues; sequence KSLSTRTTPP. The segment covering 1107-1122 has biased composition (basic and acidic residues); it reads ERQRSGKSKMDTLKVV.

The protein belongs to the adenylyl cyclase class-4/guanylyl cyclase family. In terms of tissue distribution, expressed in both ASEL and ASER neurons during early embryonic stages and becomes specifically expressed in ASER neuron in early larval stage.

The protein localises to the cell membrane. The enzyme catalyses GTP = 3',5'-cyclic GMP + diphosphate. In terms of biological role, guanylate cyclase involved in the production of the second messenger cGMP. Unlike other guanylate cyclases expressed in ASE neurons, may not play a role in chemotaxis responses to salt ions mediated by ASE sensory neurons. This Caenorhabditis elegans protein is Receptor-type guanylate cyclase gcy-5.